Here is a 498-residue protein sequence, read N- to C-terminus: Angiopoietin-1 (498 aa).

An N-terminal signal peptide occupies residues 1–15 (MTVFLSFAFLAAILT). The stretch at 81 to 119 (QKLQHLEHVMENYTQWLQKLENYIVENMKSEMAQIQQNA) forms a coiled coil. Residues Asn-92, Asn-122, Asn-154, Asn-243, and Asn-295 are each glycosylated (N-linked (GlcNAc...) asparagine). A coiled-coil region spans residues 153–261 (LNQTSRLEIQ…LELMDTVHNL (109 aa)). A Fibrinogen C-terminal domain is found at 277–497 (REEEKPFRDC…STTMMIRPLD (221 aa)). Cystine bridges form between Cys-286–Cys-315 and Cys-439–Cys-452.

In terms of assembly, homooligomer. Interacts with TEK/TIE2. Interacts with SVEP1/polydom. Interacts with THBD; this interaction significantly inhibits the generation of activated PC and TAFIa/CPB2 by the thrombin/thrombomodulin complex. In terms of processing, glycosylated.

It is found in the secreted. Binds and activates TEK/TIE2 receptor by inducing its dimerization and tyrosine phosphorylation. Plays an important role in the regulation of angiogenesis, endothelial cell survival, proliferation, migration, adhesion and cell spreading, reorganization of the actin cytoskeleton, but also maintenance of vascular quiescence. Required for normal angiogenesis and heart development during embryogenesis. After birth, activates or inhibits angiogenesis, depending on the context. Inhibits angiogenesis and promotes vascular stability in quiescent vessels, where endothelial cells have tight contacts. In quiescent vessels, ANGPT1 oligomers recruit TEK to cell-cell contacts, forming complexes with TEK molecules from adjoining cells, and this leads to preferential activation of phosphatidylinositol 3-kinase and the AKT1 signaling cascades. In migrating endothelial cells that lack cell-cell adhesions, ANGT1 recruits TEK to contacts with the extracellular matrix, leading to the formation of focal adhesion complexes, activation of PTK2/FAK and of the downstream kinases MAPK1/ERK2 and MAPK3/ERK1, and ultimately to the stimulation of sprouting angiogenesis. Mediates blood vessel maturation/stability. Implicated in endothelial developmental processes later and distinct from that of VEGF. Appears to play a crucial role in mediating reciprocal interactions between the endothelium and surrounding matrix and mesenchyme. This Homo sapiens (Human) protein is Angiopoietin-1 (ANGPT1).